Here is a 130-residue protein sequence, read N- to C-terminus: Small ribosomal subunit protein uS8 (130 aa).

The residue at position 88 (K88) is an N6-succinyllysine.

This sequence belongs to the universal ribosomal protein uS8 family. As to quaternary structure, component of the small ribosomal subunit. Part of the small subunit (SSU) processome, composed of more than 70 proteins and the RNA chaperone small nucleolar RNA (snoRNA) U3.

It localises to the cytoplasm. The protein localises to the nucleus. It is found in the nucleolus. Functionally, component of the small ribosomal subunit. The ribosome is a large ribonucleoprotein complex responsible for the synthesis of proteins in the cell. Part of the small subunit (SSU) processome, first precursor of the small eukaryotic ribosomal subunit. During the assembly of the SSU processome in the nucleolus, many ribosome biogenesis factors, an RNA chaperone and ribosomal proteins associate with the nascent pre-rRNA and work in concert to generate RNA folding, modifications, rearrangements and cleavage as well as targeted degradation of pre-ribosomal RNA by the RNA exosome. Required for proper erythropoiesis. The protein is Small ribosomal subunit protein uS8 (Rps15a) of Mus musculus (Mouse).